Consider the following 293-residue polypeptide: Probable adenylate kinase 1, chloroplastic (293 aa).

A mitochondrion-targeting transit peptide spans 1–26 (MAAVQRLLRASASGGAAAAAAAARRR). 70–75 (GVGKGT) provides a ligand contact to ATP. An NMP region spans residues 90-119 (ATGDLVRDELASSGPLSVQLAEIVNQGKLV). AMP is bound by residues threonine 91, arginine 96, 117–119 (KLV), 147–150 (GFPR), and glutamine 154. An LID region spans residues 183–231 (GRRICGQCGKNFNLACIDVKGENGLPPIYMAPLLPPNNCMSKLITRADD). ATP contacts are provided by residues arginine 184 and 193–194 (NF). AMP is bound by residues arginine 228 and arginine 239.

This sequence belongs to the adenylate kinase family.

Its subcellular location is the mitochondrion. It catalyses the reaction AMP + ATP = 2 ADP. Functionally, catalyzes the reversible transfer of the terminal phosphate group between ATP and AMP. Plays an important role in cellular energy homeostasis and in adenine nucleotide metabolism. This is Probable adenylate kinase 1, chloroplastic from Oryza sativa subsp. japonica (Rice).